The following is a 453-amino-acid chain: Secreted triacylglycerol lipase LIP3 (453 aa).

The signal sequence occupies residues 1-19 (MKLGIVAFTLISFAAQALA). N-linked (GlcNAc...) asparagine glycosylation occurs at N98. C115 and C284 are disulfide-bonded. S197 serves as the catalytic Nucleophile. N230 carries an N-linked (GlcNAc...) asparagine glycan. Active-site residues include D344 and H378. C360 and C406 are oxidised to a cystine.

The protein belongs to the AB hydrolase superfamily. Lipase family. Class Lip subfamily.

The protein localises to the secreted. The protein resides in the cell wall. It carries out the reaction a triacylglycerol + H2O = a diacylglycerol + a fatty acid + H(+). The catalysed reaction is a monoacylglycerol + H2O = glycerol + a fatty acid + H(+). The enzyme catalyses a diacylglycerol + H2O = a monoacylglycerol + a fatty acid + H(+). Functionally, secreted lipase involved in Dandruff and seborrheic dermatitis (D/SD) probably via lipase-mediated breakdown of sebaceous lipids and release of irritating free fatty acids. Has triacylglycerol lipase activity and is able to hydrolyze triolein, tristearin, trilinolein, tripalmitoylglycerol and trihexadecenoin. Hydrolyzes diacylglycerols such as distearin, dilinolein, dipalmitoylglycerol and dipalmitolein. Mostly converts monoolein to di- and triolein, while free fatty acids are only produced in low amounts. In Malassezia globosa (strain ATCC MYA-4612 / CBS 7966) (Dandruff-associated fungus), this protein is Secreted triacylglycerol lipase LIP3.